Consider the following 436-residue polypeptide: GTPase Der (436 aa).

EngA-type G domains follow at residues 4-167 (PVIA…PKIE) and 176-351 (IRFS…ESHS). GTP-binding positions include 10-17 (GRPNVGKS), 57-61 (DTGGI), 119-122 (NKVD), 182-189 (GRPNVGKS), 229-233 (DTAGM), and 294-297 (NKWD). Residues 352 to 436 (IRIQTNVLND…PIHIIARARD (85 aa)) form the KH-like domain.

The protein belongs to the TRAFAC class TrmE-Era-EngA-EngB-Septin-like GTPase superfamily. EngA (Der) GTPase family. Associates with the 50S ribosomal subunit.

GTPase that plays an essential role in the late steps of ribosome biogenesis. This chain is GTPase Der, found in Bacillus anthracis (strain A0248).